A 146-amino-acid polypeptide reads, in one-letter code: Flagellar assembly factor FliW 1 (146 aa).

Belongs to the FliW family. Interacts with translational regulator CsrA and flagellin(s).

It localises to the cytoplasm. Functionally, acts as an anti-CsrA protein, binds CsrA and prevents it from repressing translation of its target genes, one of which is flagellin. Binds to flagellin and participates in the assembly of the flagellum. The polypeptide is Flagellar assembly factor FliW 1 (Helicobacter hepaticus (strain ATCC 51449 / 3B1)).